The chain runs to 175 residues: B9 domain-containing protein 2 (175 aa).

Residues Ala-2 to Ser-118 form the C2 B9-type domain.

Belongs to the B9D family. As to quaternary structure, part of the tectonic-like complex (also named B9 complex). Interacts with TUBG1.

The protein localises to the cytoplasm. It localises to the cytoskeleton. Its subcellular location is the cilium basal body. The protein resides in the cilium axoneme. It is found in the nucleus. Functionally, component of the tectonic-like complex, a complex localized at the transition zone of primary cilia and acting as a barrier that prevents diffusion of transmembrane proteins between the cilia and plasma membranes. The protein is B9 domain-containing protein 2 (B9D2) of Homo sapiens (Human).